The chain runs to 98 residues: Small ribosomal subunit protein bS20 (98 aa).

Over residues methionine 1 to proline 12 the composition is skewed to basic residues. Residues methionine 1 to serine 34 are disordered.

Belongs to the bacterial ribosomal protein bS20 family.

Binds directly to 16S ribosomal RNA. The polypeptide is Small ribosomal subunit protein bS20 (Chlamydia muridarum (strain MoPn / Nigg)).